A 718-amino-acid polypeptide reads, in one-letter code: Catalase-peroxidase (718 aa).

A cross-link (tryptophyl-tyrosyl-methioninium (Trp-Tyr) (with M-245)) is located at residues 98 to 219 (WHAAGTYRMG…LAATEMGLIY (122 aa)). The Proton acceptor role is filled by histidine 99. A cross-link (tryptophyl-tyrosyl-methioninium (Tyr-Met) (with W-98)) is located at residues 219-245 (YVNPEGPQASGDPRSAAPFIRATFGNM). Histidine 260 is a binding site for heme b.

Belongs to the peroxidase family. Peroxidase/catalase subfamily. Homodimer or homotetramer. The cofactor is heme b. Post-translationally, formation of the three residue Trp-Tyr-Met cross-link is important for the catalase, but not the peroxidase activity of the enzyme.

The enzyme catalyses H2O2 + AH2 = A + 2 H2O. The catalysed reaction is 2 H2O2 = O2 + 2 H2O. Bifunctional enzyme with both catalase and broad-spectrum peroxidase activity. This chain is Catalase-peroxidase, found in Acinetobacter baumannii (strain ATCC 17978 / DSM 105126 / CIP 53.77 / LMG 1025 / NCDC KC755 / 5377).